Reading from the N-terminus, the 1244-residue chain is Alpha-protein kinase 1 (1244 aa).

Residues Phe61, Gln67, Arg116, 150-153, Asp231, Lys233, 236-237, and Phe295 each bind ADP-D-glycero-beta-D-manno-heptose; these read RQAR and ST. Disordered regions lie at residues 650–675, 701–737, 757–798, and 824–848; these read LQEP…TPFS, VRNM…THPS, VKDR…TEDA, and NWPV…DPDA. The segment covering 652-675 has biased composition (polar residues); that stretch reads EPNNDNLEPSQNQPQQQMPLTPFS. A compositionally biased stretch (low complexity) spans 713-726; that stretch reads SRPSYRSASWSSDS. Basic and acidic residues predominate over residues 757–771; it reads VKDRQGKEQGEEISE. The segment covering 787 to 798 has biased composition (acidic residues); it reads PEGETAESTEDA. Residues 1017-1237 form the Alpha-type protein kinase domain; sequence KYSKKSELWT…ICHRLSLTRP (221 aa).

Belongs to the protein kinase superfamily. Alpha-type protein kinase family. ALPK subfamily. Highly expressed in liver. Expressed in the optic nerve and retinal pigmented epithelium. Lower expression is observed in the macula and extramacular retina.

It localises to the cytoplasm. The protein localises to the cytosol. Its subcellular location is the cytoskeleton. It is found in the spindle pole. The protein resides in the microtubule organizing center. It localises to the centrosome. The protein localises to the cell projection. Its subcellular location is the cilium. The catalysed reaction is L-seryl-[protein] + ATP = O-phospho-L-seryl-[protein] + ADP + H(+). It carries out the reaction L-threonyl-[protein] + ATP = O-phospho-L-threonyl-[protein] + ADP + H(+). Its activity is regulated as follows. Serine/threonine-protein kinase activity is stimulated upon ADP-D-glycero-beta-D-manno-heptose (ADP-Heptose)-binding. In terms of biological role, serine/threonine-protein kinase that detects bacterial pathogen-associated molecular pattern metabolites (PAMPs) and initiates an innate immune response, a critical step for pathogen elimination and engagement of adaptive immunity. Specifically recognizes and binds ADP-D-glycero-beta-D-manno-heptose (ADP-Heptose), a potent PAMP present in all Gram-negative and some Gram-positive bacteria. ADP-Heptose-binding stimulates its kinase activity to phosphorylate and activate TIFA, triggering pro-inflammatory NF-kappa-B signaling. May be involved in monosodium urate monohydrate (MSU)-induced inflammation by mediating phosphorylation of unconventional myosin MYO9A. May also play a role in apical protein transport by mediating phosphorylation of unconventional myosin MYO1A. May play a role in ciliogenesis. In Homo sapiens (Human), this protein is Alpha-protein kinase 1.